The chain runs to 72 residues: Prophage late control protein OgrK (72 aa).

Cryptic version of the phage P2 OGR protein which acts as an activator of P2 late transcription. In Escherichia coli (strain K12), this protein is Prophage late control protein OgrK (ogrK).